Consider the following 282-residue polypeptide: Pantothenate synthetase (282 aa).

30-37 (MGALHAGH) serves as a coordination point for ATP. His37 acts as the Proton donor in catalysis. Residue Gln61 participates in (R)-pantoate binding. Gln61 lines the beta-alanine pocket. ATP is bound at residue 147-150 (GEKD). Gln153 contributes to the (R)-pantoate binding site. ATP-binding positions include Val177 and 185-188 (LSSR).

This sequence belongs to the pantothenate synthetase family. As to quaternary structure, homodimer.

The protein localises to the cytoplasm. The enzyme catalyses (R)-pantoate + beta-alanine + ATP = (R)-pantothenate + AMP + diphosphate + H(+). It functions in the pathway cofactor biosynthesis; (R)-pantothenate biosynthesis; (R)-pantothenate from (R)-pantoate and beta-alanine: step 1/1. In terms of biological role, catalyzes the condensation of pantoate with beta-alanine in an ATP-dependent reaction via a pantoyl-adenylate intermediate. The polypeptide is Pantothenate synthetase (Phocaeicola vulgatus (strain ATCC 8482 / DSM 1447 / JCM 5826 / CCUG 4940 / NBRC 14291 / NCTC 11154) (Bacteroides vulgatus)).